We begin with the raw amino-acid sequence, 243 residues long: Adenosine 5'-phosphosulfate reductase (243 aa).

Positions 126, 127, 209, and 212 each coordinate [4Fe-4S] cluster. Cys235 functions as the Nucleophile; cysteine thiosulfonate intermediate in the catalytic mechanism.

It belongs to the PAPS reductase family. CysH subfamily. [4Fe-4S] cluster serves as cofactor.

It is found in the cytoplasm. The enzyme catalyses [thioredoxin]-disulfide + sulfite + AMP + 2 H(+) = adenosine 5'-phosphosulfate + [thioredoxin]-dithiol. It participates in sulfur metabolism; hydrogen sulfide biosynthesis; sulfite from sulfate. Its function is as follows. Catalyzes the formation of sulfite from adenosine 5'-phosphosulfate (APS) using thioredoxin as an electron donor. The chain is Adenosine 5'-phosphosulfate reductase from Staphylococcus epidermidis (strain ATCC 35984 / DSM 28319 / BCRC 17069 / CCUG 31568 / BM 3577 / RP62A).